We begin with the raw amino-acid sequence, 270 residues long: Orotidine 5'-phosphate decarboxylase (270 aa).

Residues D39, 61 to 63 (KTH), 93 to 102 (DRKFADIGNT), Y221, and R239 each bind substrate. K95 (proton donor) is an active-site residue.

The protein belongs to the OMP decarboxylase family.

It catalyses the reaction orotidine 5'-phosphate + H(+) = UMP + CO2. It functions in the pathway pyrimidine metabolism; UMP biosynthesis via de novo pathway; UMP from orotate: step 2/2. This Candida albicans (strain SC5314 / ATCC MYA-2876) (Yeast) protein is Orotidine 5'-phosphate decarboxylase (URA3).